Consider the following 182-residue polypeptide: Ribosome maturation factor RimM (182 aa).

The region spanning 103-182 (EDDYYWKDLM…RVEVDWDPGF (80 aa)) is the PRC barrel domain.

Belongs to the RimM family. Binds ribosomal protein uS19.

Its subcellular location is the cytoplasm. In terms of biological role, an accessory protein needed during the final step in the assembly of 30S ribosomal subunit, possibly for assembly of the head region. Essential for efficient processing of 16S rRNA. May be needed both before and after RbfA during the maturation of 16S rRNA. It has affinity for free ribosomal 30S subunits but not for 70S ribosomes. This is Ribosome maturation factor RimM from Yersinia pestis (strain Pestoides F).